We begin with the raw amino-acid sequence, 109 residues long: NADH-quinone oxidoreductase subunit K (109 aa).

3 helical membrane passes run 12 to 32, 40 to 60, and 72 to 92; these read LNHYLILSSLVFTIGMLGLFM, ILMSIELMLLAVNINFVAFSV, and IIILTIAAAETSIGLAILLIY.

It belongs to the complex I subunit 4L family. In terms of assembly, NDH-1 is composed of 14 different subunits. Subunits NuoA, H, J, K, L, M, N constitute the membrane sector of the complex.

The protein localises to the cell inner membrane. The enzyme catalyses a quinone + NADH + 5 H(+)(in) = a quinol + NAD(+) + 4 H(+)(out). In terms of biological role, NDH-1 shuttles electrons from NADH, via FMN and iron-sulfur (Fe-S) centers, to quinones in the respiratory chain. The immediate electron acceptor for the enzyme in this species is believed to be ubiquinone. Couples the redox reaction to proton translocation (for every two electrons transferred, four hydrogen ions are translocated across the cytoplasmic membrane), and thus conserves the redox energy in a proton gradient. This chain is NADH-quinone oxidoreductase subunit K, found in Rickettsia bellii (strain RML369-C).